The chain runs to 254 residues: E3 ubiquitin-protein ligase NEURL3 (254 aa).

In terms of domain architecture, NHR spans 17 to 174; sequence ALSFHGNATG…TTKAIELLDP (158 aa). An RING-type zinc finger spans residues 197–236; the sequence is CVICFHNTANTRLMPCGHSHFCGSCAWHIFKDTARCPICR.

Expressed in alveolar epithelial type II cells.

It localises to the cytoplasm. The enzyme catalyses S-ubiquitinyl-[E2 ubiquitin-conjugating enzyme]-L-cysteine + [acceptor protein]-L-lysine = [E2 ubiquitin-conjugating enzyme]-L-cysteine + N(6)-ubiquitinyl-[acceptor protein]-L-lysine.. Its pathway is protein modification; protein ubiquitination. Its function is as follows. E3 ubiquitin-protein ligase that plays a role in various biological processes such as lung development or innate immunity. Seems to utilize UBE2E1. Promotes innate antiviral response by catalyzing 'Lys-63'-linked ubiquitination of IRF7. Plays an essential role in TLR4-mediated activation of MAPK pathways by promoting 'Lys-48'-linked polyubiquitination of the phosphatase DUSP1/MKP1. The chain is E3 ubiquitin-protein ligase NEURL3 (Neurl3) from Mus musculus (Mouse).